The sequence spans 441 residues: Transducin-like enhancer protein 7 (441 aa).

Disordered stretches follow at residues 1–77 (MSGE…QWHL) and 91–119 (PDAQ…SSSS). Low complexity predominate over residues 27–49 (ESSGVSSQPEPQVQQQLGSLLGV). The segment covering 62-76 (PADQETSTVTQQQWH) has biased composition (polar residues). A compositionally biased stretch (low complexity) spans 108-119 (GSEVGQPYSSSS). WD repeat units lie at residues 156–194 (FHGK…AGEK), 204–243 (HPQD…QVRA), 247–285 (STGP…LIRK), 286–325 (HEVP…RLHQ), and 409–441 (EESS…QLLY).

This sequence belongs to the WD repeat Groucho/TLE family.

The sequence is that of Transducin-like enhancer protein 7 from Homo sapiens (Human).